A 218-amino-acid polypeptide reads, in one-letter code: Small ribosomal subunit protein uS3c (218 aa).

In terms of domain architecture, KH type-2 spans 47–118 (VQKNMRTSSG…KLNIAVTRIA (72 aa)).

The protein belongs to the universal ribosomal protein uS3 family. As to quaternary structure, part of the 30S ribosomal subunit.

The protein resides in the plastid. Its subcellular location is the chloroplast. This is Small ribosomal subunit protein uS3c (rps3) from Solanum lycopersicum (Tomato).